The following is a 327-amino-acid chain: GTP 3',8-cyclase (327 aa).

One can recognise a Radical SAM core domain in the interval Ser-21–Lys-233. Arg-30 lines the GTP pocket. 2 residues coordinate [4Fe-4S] cluster: Cys-37 and Cys-41. Tyr-43 is an S-adenosyl-L-methionine binding site. Cys-44 lines the [4Fe-4S] cluster pocket. Arg-79 contacts GTP. Gly-83 contacts S-adenosyl-L-methionine. GTP is bound at residue Thr-109. Ser-133 contacts S-adenosyl-L-methionine. Lys-169 is a GTP binding site. Met-203 contributes to the S-adenosyl-L-methionine binding site. [4Fe-4S] cluster-binding residues include Cys-265 and Cys-268. Arg-270–Arg-272 serves as a coordination point for GTP. A [4Fe-4S] cluster-binding site is contributed by Cys-282.

Belongs to the radical SAM superfamily. MoaA family. As to quaternary structure, monomer and homodimer. [4Fe-4S] cluster is required as a cofactor.

The catalysed reaction is GTP + AH2 + S-adenosyl-L-methionine = (8S)-3',8-cyclo-7,8-dihydroguanosine 5'-triphosphate + 5'-deoxyadenosine + L-methionine + A + H(+). It participates in cofactor biosynthesis; molybdopterin biosynthesis. Its function is as follows. Catalyzes the cyclization of GTP to (8S)-3',8-cyclo-7,8-dihydroguanosine 5'-triphosphate. The sequence is that of GTP 3',8-cyclase from Synechocystis sp. (strain ATCC 27184 / PCC 6803 / Kazusa).